A 486-amino-acid chain; its full sequence is Cardiolipin synthase A (486 aa).

The next 2 helical transmembrane spans lie at threonine 3–valine 23 and methionine 38–phenylalanine 58. PLD phosphodiesterase domains lie at methionine 219–arginine 246 and glutamate 399–serine 426. Catalysis depends on residues histidine 224, lysine 226, aspartate 231, histidine 404, lysine 406, and aspartate 411.

This sequence belongs to the phospholipase D family. Cardiolipin synthase subfamily. ClsA sub-subfamily.

The protein resides in the cell inner membrane. It catalyses the reaction 2 a 1,2-diacyl-sn-glycero-3-phospho-(1'-sn-glycerol) = a cardiolipin + glycerol. Functionally, catalyzes the reversible phosphatidyl group transfer from one phosphatidylglycerol molecule to another to form cardiolipin (CL) (diphosphatidylglycerol) and glycerol. The chain is Cardiolipin synthase A from Edwardsiella ictaluri (strain 93-146).